A 507-amino-acid polypeptide reads, in one-letter code: ATP synthase subunit alpha, chloroplastic (507 aa).

170-177 (GDRQTGKT) lines the ATP pocket.

Belongs to the ATPase alpha/beta chains family. In terms of assembly, F-type ATPases have 2 components, CF(1) - the catalytic core - and CF(0) - the membrane proton channel. CF(1) has five subunits: alpha(3), beta(3), gamma(1), delta(1), epsilon(1). CF(0) has four main subunits: a, b, b' and c.

Its subcellular location is the plastid. The protein resides in the chloroplast thylakoid membrane. The catalysed reaction is ATP + H2O + 4 H(+)(in) = ADP + phosphate + 5 H(+)(out). Produces ATP from ADP in the presence of a proton gradient across the membrane. The alpha chain is a regulatory subunit. The protein is ATP synthase subunit alpha, chloroplastic of Phalaenopsis aphrodite subsp. formosana (Moth orchid).